The primary structure comprises 138 residues: Mini-ribonuclease 3 (138 aa).

The active site involves Asp-33.

The protein belongs to the MrnC RNase family. As to quaternary structure, homodimer. Mg(2+) serves as cofactor.

It localises to the cytoplasm. Its function is as follows. Involved in correct processing of both the 5' and 3' ends of 23S rRNA precursor. Processes 30S rRNA precursor transcript even in absence of ribonuclease 3 (Rnc); Rnc processes 30S rRNA into smaller rRNA precursors. This is Mini-ribonuclease 3 from Synechococcus sp. (strain ATCC 27144 / PCC 6301 / SAUG 1402/1) (Anacystis nidulans).